Reading from the N-terminus, the 99-residue chain is Transcription factor 1 (99 aa).

May be involved in preference for HM-URA DNA regions lie at residues proline 52–valine 77 and glutamate 90–lysine 99. DNA-binding regions lie at residues phenylalanine 61 and lysine 93–tyrosine 94.

This sequence belongs to the bacterial histone-like protein family. In terms of assembly, homodimer.

In terms of biological role, selectively binds to and inhibits the transcription of hydroxymethyluracil-(hmUra)-containing DNA, such as SP01 DNA, by RNA polymerase in vitro. This is Transcription factor 1 (TF1) from Bacillus phage SP01 (Bacteriophage SP01).